Reading from the N-terminus, the 156-residue chain is 6,7-dimethyl-8-ribityllumazine synthase (156 aa).

5-amino-6-(D-ribitylamino)uracil is bound by residues W28, 60–62, and 82–84; these read SFE and VVV. 87–88 is a (2S)-2-hydroxy-3-oxobutyl phosphate binding site; sequence GT. The Proton donor role is filled by H90. F115 provides a ligand contact to 5-amino-6-(D-ribitylamino)uracil. R129 serves as a coordination point for (2S)-2-hydroxy-3-oxobutyl phosphate.

It belongs to the DMRL synthase family.

It catalyses the reaction (2S)-2-hydroxy-3-oxobutyl phosphate + 5-amino-6-(D-ribitylamino)uracil = 6,7-dimethyl-8-(1-D-ribityl)lumazine + phosphate + 2 H2O + H(+). It participates in cofactor biosynthesis; riboflavin biosynthesis; riboflavin from 2-hydroxy-3-oxobutyl phosphate and 5-amino-6-(D-ribitylamino)uracil: step 1/2. In terms of biological role, catalyzes the formation of 6,7-dimethyl-8-ribityllumazine by condensation of 5-amino-6-(D-ribitylamino)uracil with 3,4-dihydroxy-2-butanone 4-phosphate. This is the penultimate step in the biosynthesis of riboflavin. This Kocuria rhizophila (strain ATCC 9341 / DSM 348 / NBRC 103217 / DC2201) protein is 6,7-dimethyl-8-ribityllumazine synthase.